We begin with the raw amino-acid sequence, 122 residues long: Small ribosomal subunit protein uS13 (122 aa).

Residues 99 to 122 (RGQRTHTNARTRKGPAKAIAGKKK) are disordered.

The protein belongs to the universal ribosomal protein uS13 family. Part of the 30S ribosomal subunit. Forms a loose heterodimer with protein S19. Forms two bridges to the 50S subunit in the 70S ribosome.

Located at the top of the head of the 30S subunit, it contacts several helices of the 16S rRNA. In the 70S ribosome it contacts the 23S rRNA (bridge B1a) and protein L5 of the 50S subunit (bridge B1b), connecting the 2 subunits; these bridges are implicated in subunit movement. Contacts the tRNAs in the A and P-sites. The polypeptide is Small ribosomal subunit protein uS13 (Parvibaculum lavamentivorans (strain DS-1 / DSM 13023 / NCIMB 13966)).